The chain runs to 473 residues: Glutamate--tRNA ligase (473 aa).

Positions 11-21 match the 'HIGH' region motif; it reads PSPTGFLHIGG. The 'KMSKS' region signature appears at 240-244; the sequence is KLSKR. K243 contributes to the ATP binding site.

The protein belongs to the class-I aminoacyl-tRNA synthetase family. Glutamate--tRNA ligase type 1 subfamily. Monomer.

The protein resides in the cytoplasm. The enzyme catalyses tRNA(Glu) + L-glutamate + ATP = L-glutamyl-tRNA(Glu) + AMP + diphosphate. Functionally, catalyzes the attachment of glutamate to tRNA(Glu) in a two-step reaction: glutamate is first activated by ATP to form Glu-AMP and then transferred to the acceptor end of tRNA(Glu). The chain is Glutamate--tRNA ligase from Afipia carboxidovorans (strain ATCC 49405 / DSM 1227 / KCTC 32145 / OM5) (Oligotropha carboxidovorans).